A 121-amino-acid polypeptide reads, in one-letter code: Large ribosomal subunit protein bL20 (121 aa).

Belongs to the bacterial ribosomal protein bL20 family.

Binds directly to 23S ribosomal RNA and is necessary for the in vitro assembly process of the 50S ribosomal subunit. It is not involved in the protein synthesizing functions of that subunit. The protein is Large ribosomal subunit protein bL20 of Dinoroseobacter shibae (strain DSM 16493 / NCIMB 14021 / DFL 12).